Reading from the N-terminus, the 550-residue chain is Acyl-CoA-dependent acyltransferase MAC2 (550 aa).

The protein belongs to the trichothecene O-acetyltransferase family.

The protein operates within secondary metabolite biosynthesis. In terms of biological role, acyl-CoA-dependent acyltransferase; part of the gene cluster that mediates the biosynthesis of mannosylerythritol lipids (MELs), surface-active substances that enhance the availability of water-insoluble substrates. Depending on the number of acetyl groups, mannosylerythritol lipids can be differentiated into MEL A (fully acetylated), MEL B and MEL C (monoacetylated at R-6 and R-4, respectively), and the fully deacetylated MEL D. The first step in the pathway is the generation of mannosylerythritol by the glycosyltransferase EMT1 which catalyzes the transfer of GDP-mannose to the C-4 atom of meso-erythritol. This reaction has to be stereospecific, since only mannosyl-D-erythritol is generated. The produced disaccharide is subsequently acylated with fatty acids of various lengths by the acyltransferases MAC1 and MAC2 at positions C-2 and C-3, repectively. The existence of MEL derivatives which carry an acetyl group at C-2 implies that at least MAC1 also accepts acetyl-CoA as a donor. The final step of MEL biosynthesis is the acetylation of the fully acylated mannosylerythritol lipids catalyzed by the acetyl-CoA-dependent acetyltransferase MAT1. MAT1 displays a relaxed regioselectivity and is able to transfer acetylgroups to both positions C-4 and C-6 of the mannosyl moiety. The protein is Acyl-CoA-dependent acyltransferase MAC2 of Pseudozyma antarctica (strain T-34) (Yeast).